We begin with the raw amino-acid sequence, 251 residues long: Probable transcriptional regulatory protein Pmob_0807 (251 aa).

Positions 1-22 are disordered; it reads MSGHNKWANIKHRKGAQDAKRS.

Belongs to the TACO1 family.

The protein localises to the cytoplasm. In Petrotoga mobilis (strain DSM 10674 / SJ95), this protein is Probable transcriptional regulatory protein Pmob_0807.